The sequence spans 309 residues: 2-phospho-L-lactate transferase (309 aa).

The 7,8-didemethyl-8-hydroxy-5-deazariboflavin site is built by D50 and K89.

The protein belongs to the CofD family. In terms of assembly, homodimer. Mg(2+) serves as cofactor.

It catalyses the reaction (2S)-lactyl-2-diphospho-5'-guanosine + 7,8-didemethyl-8-hydroxy-5-deazariboflavin = oxidized coenzyme F420-0 + GMP + H(+). The protein operates within cofactor biosynthesis; coenzyme F420 biosynthesis. Functionally, catalyzes the transfer of the 2-phospholactate moiety from (2S)-lactyl-2-diphospho-5'-guanosine to 7,8-didemethyl-8-hydroxy-5-deazariboflavin (FO) with the formation of oxidized coenzyme F420-0 and GMP. This chain is 2-phospho-L-lactate transferase, found in Methanococcus maripaludis (strain C5 / ATCC BAA-1333).